Here is a 102-residue protein sequence, read N- to C-terminus: Integration host factor subunit beta (102 aa).

It belongs to the bacterial histone-like protein family. As to quaternary structure, heterodimer of an alpha and a beta chain.

This protein is one of the two subunits of integration host factor, a specific DNA-binding protein that functions in genetic recombination as well as in transcriptional and translational control. This is Integration host factor subunit beta (ihfB) from Rhizobium radiobacter (Agrobacterium tumefaciens).